A 461-amino-acid polypeptide reads, in one-letter code: Gustatory and pheromone receptor 32a (461 aa).

Topologically, residues 1–100 are cytoplasmic; that stretch reads MSPNTWVIEM…YSFFVRGVVH (100 aa). The chain crosses the membrane as a helical span at residues 101–121; that stretch reads ALTIFNVYSLFTPISAQLFFS. Over 122-127 the chain is Extracellular; it reads YRETDN. A helical membrane pass occupies residues 128 to 148; sequence VNQWIELLLCILTYTLTVFVC. The Cytoplasmic segment spans residues 149 to 180; that stretch reads AHNTTSMLRIMNEILQLDEEVRRQFGANLSQN. The helical transmembrane segment at 181 to 201 threads the bilayer; that stretch reads FGFLVKFLVGITACQAYIIVL. Topologically, residues 202–214 are extracellular; that stretch reads KIYAVQGEITPTS. Residues 215–235 traverse the membrane as a helical segment; sequence YILLAFYGIQNGLTATYIVFA. The Cytoplasmic segment spans residues 236 to 317; that stretch reads SALLRIVYIR…YKGINDCCNL (82 aa). Residues 318 to 338 traverse the membrane as a helical segment; that stretch reads ILVSFLGYSFYTVTTNCYNLF. At 339 to 348 the chain is on the extracellular side; the sequence is VQITGKGMVS. A helical transmembrane segment spans residues 349-369; sequence PNILQWCFAWLCLHVSLLALL. Residues 370-414 are Cytoplasmic-facing; sequence SRSCGLTTTEANATSQILARVYAKSKEYQNIIDKFLTKSIKQEVQ. The helical transmembrane segment at 415-435 threads the bilayer; sequence FTAYGFFAIDNSTLFKIFSAV. Residues 436 to 461 are Extracellular-facing; the sequence is TTYLVILIQFKQLEDSKVEDPVPEQT.

It belongs to the insect chemoreceptor superfamily. Gustatory receptor (GR) family. Gr21a subfamily. As to expression, expressed in the adult labellar chemosensory neurons. Expressed in tarsal neurons for male-male courtship suppression. In larvae, is expressed in neurons of the terminal external chemosensory organ, and the dorsal and posterior external chemosensory organs.

The protein resides in the cell membrane. Gustatory receptor which mediates acceptance or avoidance behavior, depending on its substrates. Required for the response to N,N-Diethyl-meta-toluamide (DEET), the most widely used insect repellent worldwide. Functions as a pheromone receptor for a male inhibitory pheromone and promotes male-male aggression and suppresses male-male courtship. Also promotes preferentially virgin females courting over mated females. In Drosophila melanogaster (Fruit fly), this protein is Gustatory and pheromone receptor 32a (Gr32a).